Reading from the N-terminus, the 154-residue chain is Bacterial ferritin (154 aa).

Residues 1–145 (MQGNQAVVDY…QQLRLIELIG (145 aa)) form the Ferritin-like diiron domain. 6 residues coordinate Fe cation: glutamate 18, glutamate 51, histidine 54, glutamate 93, glutamate 127, and histidine 130.

It belongs to the bacterioferritin family. As to quaternary structure, heterooligomer of 24 subunits, arranged as 12 dimers, that are packed together to form an approximately spherical molecule with a central cavity, in which large amounts of iron can be deposited.

It catalyses the reaction 4 Fe(2+) + O2 + 4 H(+) = 4 Fe(3+) + 2 H2O. It carries out the reaction Fe(2+)(in) = Fe(2+)(out). In terms of biological role, iron-storage protein, whose ferroxidase center binds Fe(2+), oxidizes it using dioxygen to Fe(3+), and participates in the subsequent Fe(3+) oxide mineral core formation within the central cavity of the BFR protein shell. The sequence is that of Bacterial ferritin (bfrA) from Neisseria meningitidis serogroup A / serotype 4A (strain DSM 15465 / Z2491).